The primary structure comprises 191 residues: MIRITDAAQEHFLKLLAKQEEGTQIRVFVINPGTPNAECGVSYCPPDAVEASDTVVKFEKISAYVDELSSPYLEDADIDFVTDQLGSQLTLKAPNAKMRKVDDSAPLMERVEYVLQSQINPQLAGHGGRVTLMEITDDGLAILQFGGGCNGCSMVDFTLKEGIEKELLEKFPELKGVRDLTEHQRGEHSYY.

Residues C149 and C152 each coordinate [4Fe-4S] cluster.

The protein belongs to the NfuA family. Homodimer. [4Fe-4S] cluster serves as cofactor.

Functionally, involved in iron-sulfur cluster biogenesis. Binds a 4Fe-4S cluster, can transfer this cluster to apoproteins, and thereby intervenes in the maturation of Fe/S proteins. Could also act as a scaffold/chaperone for damaged Fe/S proteins. The chain is Fe/S biogenesis protein NfuA from Pectobacterium atrosepticum (strain SCRI 1043 / ATCC BAA-672) (Erwinia carotovora subsp. atroseptica).